The primary structure comprises 495 residues: YTH domain-containing protein ECT3 (495 aa).

The 138-residue stretch at 261 to 398 (AKFYVIKSYS…EQGIKVIKIF (138 aa)) folds into the YTH domain. RNA contacts are provided by residues 267 to 269 (KSY), Asp273, 283 to 284 (WS), Asn316, Trp340, Trp345, and Trp353.

Expressed in the shoot apex, at the sites of leaf formation, and in emerging leaves.

Its subcellular location is the cytoplasm. Specifically recognizes and binds N6-methyladenosine (m6A)-containing RNAs, and regulates mRNA stability. M6A is a modification present at internal sites of mRNAs and some non-coding RNAs and plays a role in mRNA stability and processing. Required for the correct timing of leaf formation and normal leaf morphology. Required for proper trichome branching and morphology. Functions redundantly with ECT2. The polypeptide is YTH domain-containing protein ECT3 (Arabidopsis thaliana (Mouse-ear cress)).